The sequence spans 181 residues: uncharacterized protein (181 aa).

Belongs to the isochorismatase family.

This is an uncharacterized protein from Bacillus subtilis (strain 168).